The primary structure comprises 1379 residues: DNA-directed RNA polymerase subunit beta'' (1379 aa).

C220, C293, C300, and C303 together coordinate Zn(2+).

Belongs to the RNA polymerase beta' chain family. RpoC2 subfamily. In plastids the minimal PEP RNA polymerase catalytic core is composed of four subunits: alpha, beta, beta', and beta''. When a (nuclear-encoded) sigma factor is associated with the core the holoenzyme is formed, which can initiate transcription. Zn(2+) serves as cofactor.

The protein resides in the plastid. It is found in the chloroplast. The enzyme catalyses RNA(n) + a ribonucleoside 5'-triphosphate = RNA(n+1) + diphosphate. DNA-dependent RNA polymerase catalyzes the transcription of DNA into RNA using the four ribonucleoside triphosphates as substrates. This chain is DNA-directed RNA polymerase subunit beta'', found in Crucihimalaya wallichii (Rock-cress).